The primary structure comprises 539 residues: M protein, serotype 24 (539 aa).

A signal peptide spans Met-1–Ala-42. One copy of the A-1 repeat lies at Leu-118 to Ala-152. Positions Leu-118–Glu-301 are 5.3 X 35 AA tandem repeats, A-type. The A-2 repeat unit spans residues Leu-153–Ala-187. One copy of the A-3 repeat lies at Leu-188–Ala-222. The A-4 repeat unit spans residues Leu-223 to Ala-257. The stretch at Leu-258–Ala-292 is one A-5 repeat. The A-6; truncated repeat unit spans residues Leu-293–Lys-297. Residues Lys-297–Ala-401 form a disordered region. 3 C repeats span residues Ala-298 to His-332, Gln-333 to His-367, and Gln-368 to Leu-402. A compositionally biased stretch (polar residues) spans Gln-303 to Gln-312. Composition is skewed to basic and acidic residues over residues Leu-314 to Lys-340, Leu-349 to Lys-375, and Leu-384 to Ala-401. D repeat units follow at residues Ala-435–Glu-440, Ala-441–Glu-446, Ala-449–Glu-454, and Ala-456–Gly-461. The disordered stretch occupies residues Ala-456–Thr-511. The LPXTG sorting signal signature appears at Leu-505–Gly-509. The residue at position 508 (Thr-508) is a Pentaglycyl murein peptidoglycan amidated threonine. The propeptide at Gly-509–Asn-539 is removed by sortase.

It belongs to the M protein family.

Its subcellular location is the secreted. It is found in the cell wall. Its function is as follows. This protein is one of the different antigenic serotypes of protein M. Protein M is closely associated with virulence of the bacterium and can render the organism resistant to phagocytosis. This Streptococcus pyogenes protein is M protein, serotype 24 (emm24).